A 640-amino-acid polypeptide reads, in one-letter code: PAN2-PAN3 deadenylation complex subunit PAN3 (640 aa).

The segment at glutamate 17–asparagine 46 adopts a C3H1-type zinc-finger fold. Composition is skewed to polar residues over residues histidine 43–glutamate 53 and aspartate 63–alanine 87. The tract at residues histidine 43 to threonine 101 is disordered. A pseudokinase domain region spans residues glutamine 237–alanine 498. ATP-binding positions include asparagine 263, arginine 288, aspartate 338–threonine 345, and serine 397–lysine 398. Residues serine 499 to threonine 537 adopt a coiled-coil conformation. Positions isoleucine 538–threonine 640 are knob domain.

It belongs to the protein kinase superfamily. PAN3 family. As to quaternary structure, homodimer. Forms a heterotrimer with a catalytic subunit PAN2 to form the poly(A)-nuclease (PAN) deadenylation complex. Interacts (via PAM-2 motif) with poly(A)-binding protein PAB1 (via PABC domain), conferring substrate specificity of the enzyme complex.

The protein resides in the cytoplasm. In terms of biological role, regulatory subunit of the poly(A)-nuclease (PAN) deadenylation complex, one of two cytoplasmic mRNA deadenylases involved in mRNA turnover. PAN specifically shortens poly(A) tails of RNA and the activity is stimulated by poly(A)-binding protein PAB1. PAN deadenylation is followed by rapid degradation of the shortened mRNA tails by the CCR4-NOT complex. Deadenylated mRNAs are then degraded by two alternative mechanisms, namely exosome-mediated 3'-5' exonucleolytic degradation, or deadenylation-dependent mRNA decaping and subsequent 5'-3' exonucleolytic degradation by XRN1. May also be involved in post-transcriptional maturation of mRNA poly(A) tails. PAN3 acts as a positive regulator for PAN activity, recruiting the catalytic subunit PAN2 to mRNA via its interaction with RNA and with PAB1. This is PAN2-PAN3 deadenylation complex subunit PAN3 from Chaetomium thermophilum (strain DSM 1495 / CBS 144.50 / IMI 039719) (Thermochaetoides thermophila).